Consider the following 99-residue polypeptide: Leydig cell tumor 10 kDa protein homolog (99 aa).

The segment at 1–37 (MAQGQRKFQARKPAKSKTAATASEKNRGPRKGGRVIA) is disordered. Basic residues predominate over residues 28–37 (GPRKGGRVIA).

Belongs to the UPF0390 family.

Its function is as follows. May have a potential role in hypercalcemia of malignancy. The sequence is that of Leydig cell tumor 10 kDa protein homolog from Pongo abelii (Sumatran orangutan).